A 155-amino-acid polypeptide reads, in one-letter code: 6,7-dimethyl-8-ribityllumazine synthase (155 aa).

Residues Tyr-23, 57 to 59, and 81 to 83 contribute to the 5-amino-6-(D-ribitylamino)uracil site; these read AWE and CVI. A (2S)-2-hydroxy-3-oxobutyl phosphate-binding site is contributed by 86–87; the sequence is ET. His-89 acts as the Proton donor in catalysis. 5-amino-6-(D-ribitylamino)uracil is bound at residue Phe-114. Residue Arg-128 coordinates (2S)-2-hydroxy-3-oxobutyl phosphate.

The protein belongs to the DMRL synthase family.

The enzyme catalyses (2S)-2-hydroxy-3-oxobutyl phosphate + 5-amino-6-(D-ribitylamino)uracil = 6,7-dimethyl-8-(1-D-ribityl)lumazine + phosphate + 2 H2O + H(+). Its pathway is cofactor biosynthesis; riboflavin biosynthesis; riboflavin from 2-hydroxy-3-oxobutyl phosphate and 5-amino-6-(D-ribitylamino)uracil: step 1/2. Catalyzes the formation of 6,7-dimethyl-8-ribityllumazine by condensation of 5-amino-6-(D-ribitylamino)uracil with 3,4-dihydroxy-2-butanone 4-phosphate. This is the penultimate step in the biosynthesis of riboflavin. This Rhodopirellula baltica (strain DSM 10527 / NCIMB 13988 / SH1) protein is 6,7-dimethyl-8-ribityllumazine synthase.